The primary structure comprises 272 residues: MNRIDKTLEKLKANRKKMLSPYITAGDPYPELTVSLMHQLVKSGADVLELGIPFSDPMAEGPVIQRAMERALAHSIHCDDVLNMVRQFRKTDTETPVILMGYLNPIEQYGYDLFAQQAVEAGVDGTILVDLPPEEADGVSRVWQKHGLYSIYLCSPTTSAERMNFINQHANGYLYYVSLKGVTGSDALKLPELKAQYLQRKAQSKLPLMVGFGIKTPEMAAQVAEFADGVIVGAALINEIIEAYEAKKDPLQASGALLSSMRQAIDNIGSMV.

Catalysis depends on proton acceptor residues Glu49 and Glu60.

The protein belongs to the TrpA family. As to quaternary structure, tetramer of two alpha and two beta chains.

The enzyme catalyses (1S,2R)-1-C-(indol-3-yl)glycerol 3-phosphate + L-serine = D-glyceraldehyde 3-phosphate + L-tryptophan + H2O. It functions in the pathway amino-acid biosynthesis; L-tryptophan biosynthesis; L-tryptophan from chorismate: step 5/5. Functionally, the alpha subunit is responsible for the aldol cleavage of indoleglycerol phosphate to indole and glyceraldehyde 3-phosphate. The protein is Tryptophan synthase alpha chain of Legionella pneumophila (strain Lens).